Reading from the N-terminus, the 518-residue chain is Sugar transport protein MST3 (518 aa).

At 1–18 the chain is on the cytoplasmic side; sequence MAGGAVVSTGAGKDYPGK. Residues 19–39 form a helical membrane-spanning segment; it reads LTLFVFFTCVVAATGGLIFGY. The Extracellular portion of the chain corresponds to 40-80; sequence DIGISGGVTSMDPFLRKFFPEVYRKKQMADKNNQYCKYDNQ. Residues 81-101 form a helical membrane-spanning segment; the sequence is LLQTFTSSLYLAALVSSFFAA. Residues 102–117 are Cytoplasmic-facing; it reads TVTRVLGRKWSMFAGG. A helical transmembrane segment spans residues 118–138; sequence LTFLIGAALNGAAENVAMLIV. The Extracellular segment spans residues 139-140; it reads GR. A helical transmembrane segment spans residues 141–161; the sequence is ILLGVGVGFANQSVPVYLSEM. Topologically, residues 162-167 are cytoplasmic; that stretch reads APARLR. The helical transmembrane segment at 168–188 threads the bilayer; the sequence is GMLNIGFQLMITIGILAAELI. Topologically, residues 189–202 are extracellular; it reads NYGTAKIKAGWGWR. A helical membrane pass occupies residues 203 to 223; the sequence is VSLALAAVPAAIITLGSLFLP. The Cytoplasmic portion of the chain corresponds to 224-290; that stretch reads DTPNSLIDRG…YRAQLTMAIC (67 aa). A helical membrane pass occupies residues 291–311; that stretch reads IPFFQQLTGINVIMFYAPVLF. Residues 312–322 are Extracellular-facing; sequence DTLGFKSDASL. A helical transmembrane segment spans residues 323-343; it reads MSAVITGLVNVFATLVSIFTV. The Cytoplasmic segment spans residues 344 to 351; sequence DRLGRRKL. The helical transmembrane segment at 352-372 threads the bilayer; it reads FLQGGAQMVVCQVVVGTLIAV. The Extracellular segment spans residues 373 to 387; sequence KFGTSGIGDIPKGYA. A helical transmembrane segment spans residues 388-408; it reads AVVVLFICMYVAGFAWSWGPL. Over 409-427 the chain is Cytoplasmic; the sequence is GWLVPSEIFPLEIRPAGQS. Residues 428–448 traverse the membrane as a helical segment; it reads INVSVNMLFTFVIAQAFLTML. Residues 449–452 lie on the Extracellular side of the membrane; that stretch reads CHMK. A helical membrane pass occupies residues 453-473; the sequence is FGLFYFFAGWVVIMTVFIALF. Residues 474–518 lie on the Cytoplasmic side of the membrane; that stretch reads LPETKNVPIEEMVLVWKSHWFWRRFIGDHDVHVGANHVSNNKLQP.

Belongs to the major facilitator superfamily. Sugar transporter (TC 2.A.1.1) family. In terms of tissue distribution, highly expressed in roots. Expressed in xylem and sclerenchyma cells of roots. Expressed at low levels in leaves.

The protein resides in the membrane. Functionally, mediates active uptake of hexoses by sugar:proton symport. Can transport glucose, xylose and 3-O-methylglucose. May be involved in the accumulation of monosaccharides required for cell wall synthesis during root development. This chain is Sugar transport protein MST3, found in Oryza sativa subsp. japonica (Rice).